Reading from the N-terminus, the 438-residue chain is 3-phosphoshikimate 1-carboxyvinyltransferase (438 aa).

Positions 26, 27, and 31 each coordinate 3-phosphoshikimate. Position 26 (Lys-26) interacts with phosphoenolpyruvate. 2 residues coordinate phosphoenolpyruvate: Gly-99 and Arg-127. 3-phosphoshikimate contacts are provided by Ser-170, Ser-171, Gln-172, Ser-199, Glu-314, and His-343. Position 172 (Gln-172) interacts with phosphoenolpyruvate. The Proton acceptor role is filled by Glu-314. 3 residues coordinate phosphoenolpyruvate: Arg-347, Arg-388, and Lys-413.

The protein belongs to the EPSP synthase family. Monomer.

It is found in the cytoplasm. The catalysed reaction is 3-phosphoshikimate + phosphoenolpyruvate = 5-O-(1-carboxyvinyl)-3-phosphoshikimate + phosphate. It participates in metabolic intermediate biosynthesis; chorismate biosynthesis; chorismate from D-erythrose 4-phosphate and phosphoenolpyruvate: step 6/7. In terms of biological role, catalyzes the transfer of the enolpyruvyl moiety of phosphoenolpyruvate (PEP) to the 5-hydroxyl of shikimate-3-phosphate (S3P) to produce enolpyruvyl shikimate-3-phosphate and inorganic phosphate. In Mycobacterium sp. (strain MCS), this protein is 3-phosphoshikimate 1-carboxyvinyltransferase.